A 104-amino-acid chain; its full sequence is Large ribosomal subunit protein bL21 (104 aa).

It belongs to the bacterial ribosomal protein bL21 family. As to quaternary structure, part of the 50S ribosomal subunit. Contacts protein L20.

This protein binds to 23S rRNA in the presence of protein L20. The polypeptide is Large ribosomal subunit protein bL21 (Streptococcus gordonii (strain Challis / ATCC 35105 / BCRC 15272 / CH1 / DL1 / V288)).